We begin with the raw amino-acid sequence, 108 residues long: Con-Ins K1 (108 aa).

The N-terminal stretch at 1–24 (MTTSSYFLLVALGLLLYVCQSSFG) is a signal peptide. A propeptide spanning residues 25 to 28 (SPHT) is cleaved from the precursor. Intrachain disulfides connect Cys-41/Cys-90, Cys-53/Cys-103, and Cys-89/Cys-94. Glu-44 carries the 4-carboxyglutamate modification. Residues 57-83 (RKRRGFPSMLKARAKRNEAFLLQRDGR) constitute a propeptide, c peptide. Glu-87 is modified (4-carboxyglutamate). The residue at position 107 (Gln-107) is a Glutamine amide.

It belongs to the insulin family. As to quaternary structure, heterodimer of A and B chains; disulfide-linked. Expressed by the venom gland.

Its subcellular location is the secreted. Functionally, this venom insulin, from a fish-hunting cone snail, facilitates prey capture by rapidly inducing hypoglycemic shock. It is one of the smallest known insulin found in nature and lacks the C-terminal segment of the B chain that, in human insulin, mediates engagement of the insulin receptor (INSR) and assembly of the hormone's hexameric storage form. Despite lacking this segment, it both binds and activates human insulin receptor (long isoform (HIR-B)) with a moderate potency (EC(50)=30.45 nM). In vivo, intraperitoneal injection of this peptide into zebrafish lowers blood glucose with a lower potency than human insulin. In addition, when applied to water, this peptide reduces overall locomotor activity of zebrafish larvae, observed as a significant decrease in the percentage of time spent swimming and movement frequency. When tested on a mouse model of diabetes, this insulin also lowers blood glucose with a 20-fold lower potency than human insulin. This chain is Con-Ins K1, found in Conus kinoshitai (Kinoshita's cone).